A 366-amino-acid chain; its full sequence is Peptide chain release factor 2 (366 aa).

N5-methylglutamine is present on Q251.

The protein belongs to the prokaryotic/mitochondrial release factor family. Methylated by PrmC. Methylation increases the termination efficiency of RF2.

The protein localises to the cytoplasm. Peptide chain release factor 2 directs the termination of translation in response to the peptide chain termination codons UGA and UAA. This chain is Peptide chain release factor 2, found in Exiguobacterium sp. (strain ATCC BAA-1283 / AT1b).